The sequence spans 345 residues: AA9 family lytic polysaccharide monooxygenase D (345 aa).

The N-terminal stretch at 1-21 is a signal peptide; sequence MPSFTSKTLLAALAGAAAVNA. Positions 22 and 107 each coordinate Cu(2+). Cysteine 77 and cysteine 200 are disulfide-bonded. N-linked (GlcNAc...) asparagine glycosylation is present at asparagine 160. O2 contacts are provided by histidine 186 and glutamine 195. Position 197 (tyrosine 197) interacts with Cu(2+). A disordered region spans residues 315-345; that stretch reads VQTSTRPISTRPQPTRCPGLGRRHLRKVARA. Residues 318–327 are compositionally biased toward polar residues; that stretch reads STRPISTRPQ. The segment covering 335 to 345 has biased composition (basic residues); it reads GRRHLRKVARA.

Belongs to the polysaccharide monooxygenase AA9 family. The cofactor is Cu(2+).

It localises to the secreted. The catalysed reaction is [(1-&gt;4)-beta-D-glucosyl]n+m + reduced acceptor + O2 = 4-dehydro-beta-D-glucosyl-[(1-&gt;4)-beta-D-glucosyl]n-1 + [(1-&gt;4)-beta-D-glucosyl]m + acceptor + H2O.. Lytic polysaccharide monooxygenase (LPMO) that depolymerizes crystalline and amorphous polysaccharides via the oxidation of scissile alpha- or beta-(1-4)-glycosidic bonds, yielding C1 or C4 oxidation products. Catalysis by LPMOs requires the reduction of the active-site copper from Cu(II) to Cu(I) by a reducing agent and H(2)O(2) or O(2) as a cosubstrate. The protein is AA9 family lytic polysaccharide monooxygenase D of Podospora anserina (strain S / ATCC MYA-4624 / DSM 980 / FGSC 10383) (Pleurage anserina).